The primary structure comprises 323 residues: GMP reductase (323 aa).

Cys174 functions as the Thioimidate intermediate in the catalytic mechanism. 203-226 (IIADGGIRHNGDIAKSVRFGASMV) is a binding site for NADP(+).

Belongs to the IMPDH/GMPR family. GuaC type 2 subfamily.

The catalysed reaction is IMP + NH4(+) + NADP(+) = GMP + NADPH + 2 H(+). Functionally, catalyzes the irreversible NADPH-dependent deamination of GMP to IMP. It functions in the conversion of nucleobase, nucleoside and nucleotide derivatives of G to A nucleotides, and in maintaining the intracellular balance of A and G nucleotides. This Oenococcus oeni (strain ATCC BAA-331 / PSU-1) protein is GMP reductase.